Reading from the N-terminus, the 721-residue chain is Methionine--tRNA ligase (721 aa).

The 'HIGH' region motif lies at 27 to 37 (PYANGQIHIGH). Zn(2+) contacts are provided by C158, C161, C171, and C174. The 'KMSKS' region motif lies at 348-352 (KMSKS). Residue K351 coordinates ATP. One can recognise a tRNA-binding domain in the interval 615-721 (DFAKIDLRIA…SGAKPGMRVK (107 aa)).

It belongs to the class-I aminoacyl-tRNA synthetase family. MetG type 1 subfamily. Homodimer. Zn(2+) is required as a cofactor.

The protein localises to the cytoplasm. The catalysed reaction is tRNA(Met) + L-methionine + ATP = L-methionyl-tRNA(Met) + AMP + diphosphate. In terms of biological role, is required not only for elongation of protein synthesis but also for the initiation of all mRNA translation through initiator tRNA(fMet) aminoacylation. In Burkholderia vietnamiensis (strain G4 / LMG 22486) (Burkholderia cepacia (strain R1808)), this protein is Methionine--tRNA ligase.